A 119-amino-acid polypeptide reads, in one-letter code: Beta-2-microglobulin (119 aa).

The signal sequence occupies residues 1 to 20 (MASSVVVALLVLLSLSGLEA). Residues 25–114 (PKIQVYSRHP…VTFSTPKTVK (90 aa)) enclose the Ig-like C1-type domain. C45 and C100 are oxidised to a cystine.

This sequence belongs to the beta-2-microglobulin family. In terms of assembly, heterodimer of an alpha chain and a beta chain. Beta-2-microglobulin is the beta-chain of major histocompatibility complex class I molecules.

It is found in the secreted. Component of the class I major histocompatibility complex (MHC). Involved in the presentation of peptide antigens to the immune system. This chain is Beta-2-microglobulin (B2M), found in Callithrix aurita (White-eared marmoset).